A 549-amino-acid chain; its full sequence is Probable protein kinase UbiB (549 aa).

Positions 123-501 constitute a Protein kinase domain; it reads DFEDTPLASA…QQKAHKSNYL (379 aa). Residues 129–137 and Lys152 each bind ATP; that span reads LASASISQV. The active-site Proton acceptor is Asp287. 2 helical membrane-spanning segments follow: residues 498–518 and 520–540; these read SNYL…LLNQ and ATLW…VLGW.

This sequence belongs to the ABC1 family. UbiB subfamily.

It is found in the cell inner membrane. It functions in the pathway cofactor biosynthesis; ubiquinone biosynthesis [regulation]. Is probably a protein kinase regulator of UbiI activity which is involved in aerobic coenzyme Q (ubiquinone) biosynthesis. The protein is Probable protein kinase UbiB of Shewanella piezotolerans (strain WP3 / JCM 13877).